The sequence spans 119 residues: Small ribosomal subunit protein uS13 (119 aa).

The segment at 92 to 119 (RRGLPVRGQRTKTNARTRKGPRKAIRAR) is disordered.

It belongs to the universal ribosomal protein uS13 family. Part of the 30S ribosomal subunit. Forms a loose heterodimer with protein S19. Forms two bridges to the 50S subunit in the 70S ribosome.

Its function is as follows. Located at the top of the head of the 30S subunit, it contacts several helices of the 16S rRNA. In the 70S ribosome it contacts the 23S rRNA (bridge B1a) and protein L5 of the 50S subunit (bridge B1b), connecting the 2 subunits; these bridges are implicated in subunit movement. Contacts the tRNAs in the A and P-sites. The sequence is that of Small ribosomal subunit protein uS13 from Nitrosomonas eutropha (strain DSM 101675 / C91 / Nm57).